The chain runs to 368 residues: Protein Wnt-1 (368 aa).

Positions 1–25 (MRGPALLLALRALCALSALRGTARA) are cleaved as a signal peptide. 11 disulfides stabilise this stretch: Cys-91-Cys-102, Cys-141-Cys-149, Cys-151-Cys-168, Cys-216-Cys-230, Cys-218-Cys-225, Cys-297-Cys-328, Cys-313-Cys-323, Cys-327-Cys-367, Cys-343-Cys-358, Cys-345-Cys-355, and Cys-350-Cys-351. Ser-222 carries O-palmitoleoyl serine; by PORCN lipidation.

It belongs to the Wnt family. In terms of assembly, forms a soluble 1:1 complex with AFM; this prevents oligomerization and is required for prolonged biological activity. The complex with AFM may represent the physiological form in body fluids. Interacts with PORCN. N-glycosylated. N-glycosylation favors subsequent palmitoleoylation. Post-translationally, palmitoleoylation is required for efficient binding to frizzled receptors. Palmitoleoylation is necessary for proper trafficking to cell surface. Depalmitoleoylated by NOTUM, leading to inhibit Wnt signaling pathway.

It localises to the secreted. Its subcellular location is the extracellular space. The protein localises to the extracellular matrix. Its function is as follows. Ligand for members of the frizzled family of seven transmembrane receptors. Acts in the canonical Wnt signaling pathway by promoting beta-catenin-dependent transcriptional activation. Developmental protein that promotes cell proliferation in the developing spinal cord. Has a role in osteoblast function, bone development and bone homeostasis. This is Protein Wnt-1 (WNT1) from Gallus gallus (Chicken).